An 88-amino-acid chain; its full sequence is Large ribosomal subunit protein bL27 (88 aa).

The interval 1 to 21 (MAHKKGTGSTRNGRDSRAQRL) is disordered.

Belongs to the bacterial ribosomal protein bL27 family.

The polypeptide is Large ribosomal subunit protein bL27 (Picosynechococcus sp. (strain ATCC 27264 / PCC 7002 / PR-6) (Agmenellum quadruplicatum)).